Here is a 417-residue protein sequence, read N- to C-terminus: D-glycerate 2-kinase (417 aa).

This sequence belongs to the glycerate kinase type-1 family. Homodimer. Requires Mg(2+) as cofactor.

It carries out the reaction (R)-glycerate + ATP = (2R)-2-phosphoglycerate + ADP + H(+). Functionally, involved in the degradation of serine via 3-hydroxypyruvate. Catalyzes the ATP-dependent phosphorylation of D-glycerate to 2-phosphoglycerate. The chain is D-glycerate 2-kinase from Thermotoga maritima (strain ATCC 43589 / DSM 3109 / JCM 10099 / NBRC 100826 / MSB8).